The following is a 436-amino-acid chain: 3-ketoacyl-CoA thiolase (436 aa).

Residue Cys99 is the Acyl-thioester intermediate of the active site. Active-site proton acceptor residues include His392 and Cys422.

The protein belongs to the thiolase-like superfamily. Thiolase family. As to quaternary structure, heterotetramer of two alpha chains (FadJ) and two beta chains (FadI).

The protein localises to the cytoplasm. The catalysed reaction is an acyl-CoA + acetyl-CoA = a 3-oxoacyl-CoA + CoA. The protein operates within lipid metabolism; fatty acid beta-oxidation. In terms of biological role, catalyzes the final step of fatty acid oxidation in which acetyl-CoA is released and the CoA ester of a fatty acid two carbons shorter is formed. The polypeptide is 3-ketoacyl-CoA thiolase (Salmonella typhimurium (strain LT2 / SGSC1412 / ATCC 700720)).